Consider the following 652-residue polypeptide: 2-oxoglutarate carboxylase large subunit (652 aa).

Residues 26–288 form the Pyruvate carboxyltransferase domain; it reads ILITDLTPRD…DTGIDMKKLD (263 aa). Substrate contacts are provided by residues 34–38 and Arg105; that span reads RDGQQ. Asp35 is a binding site for a divalent metal cation. Lys196, His227, and His229 together coordinate a divalent metal cation. Lys196 carries the post-translational modification N6-carboxylysine. Residue Thr362 participates in substrate binding. One can recognise a Biotinyl-binding domain in the interval 563 to 643; that stretch reads AEEKGIPKAT…TPDDALLRIK (81 aa). Lys609 bears the N6-biotinyllysine mark.

Heterohexadecamer of 8 large subunits and 8 small subunits. The cofactor is Mg(2+). Requires Mn(2+) as cofactor. It depends on Co(2+) as a cofactor. In terms of processing, biotinylated.

The enzyme catalyses hydrogencarbonate + 2-oxoglutarate + ATP = (S)-oxalosuccinate + ADP + phosphate + H(+). The chain is 2-oxoglutarate carboxylase large subunit from Hydrogenobacter thermophilus (strain DSM 6534 / IAM 12695 / TK-6).